Here is a 198-residue protein sequence, read N- to C-terminus: Elongation factor Ts (198 aa).

Positions 81–84 (TDFV) are involved in Mg(2+) ion dislocation from EF-Tu.

Belongs to the EF-Ts family.

Its subcellular location is the cytoplasm. Associates with the EF-Tu.GDP complex and induces the exchange of GDP to GTP. It remains bound to the aminoacyl-tRNA.EF-Tu.GTP complex up to the GTP hydrolysis stage on the ribosome. The protein is Elongation factor Ts of Dictyoglomus thermophilum (strain ATCC 35947 / DSM 3960 / H-6-12).